The chain runs to 419 residues: ATP-dependent RNA helicase RhlB (419 aa).

Positions 9-37 (QRFSDLALHRIVQQAIKEKGFEFCTPIQA) match the Q motif motif. The region spanning 40 to 217 (LPITLKGQDI…FEHMNDPQYV (178 aa)) is the Helicase ATP-binding domain. 53–60 (AQTGTGKT) lines the ATP pocket. The DEAD box motif lies at 163–166 (DEAD). The Helicase C-terminal domain maps to 241–388 (KMALLMTLLE…VSQYDAKALI (148 aa)).

Belongs to the DEAD box helicase family. RhlB subfamily. Component of the RNA degradosome, which is a multiprotein complex involved in RNA processing and mRNA degradation.

It is found in the cytoplasm. The catalysed reaction is ATP + H2O = ADP + phosphate + H(+). Its function is as follows. DEAD-box RNA helicase involved in RNA degradation. Has RNA-dependent ATPase activity and unwinds double-stranded RNA. The chain is ATP-dependent RNA helicase RhlB from Histophilus somni (strain 2336) (Haemophilus somnus).